We begin with the raw amino-acid sequence, 308 residues long: MKELSVNNLLGIKYINENDINLVFETADHFKEVINRPIKKVPSLRDITIANIFFENSTRTKLSFELAQKRLSADVINFAASSSSVTKGETLVDTVNNILSMKVDMVVMRHASPGAAVFLSKNVKASIVNAGDGAHEHPTQALLDAYTIREKLGDVAGKKIVIVGDILHSRVALSNIYSLQKLGAEVRVCGPKTLIPKYIEALGVKVEPNLRKALEWCDVANMLRVQNERLDISYFPSTREYAMQYGLDKNLLDSLNKEIVIMHPGPINRGVEITSDVADSRQSVILNQVENGVAVRMAVIYLLASKIK.

Carbamoyl phosphate-binding residues include Arg59 and Thr60. Position 87 (Lys87) interacts with L-aspartate. Residues Arg109, His137, and Gln140 each coordinate carbamoyl phosphate. The L-aspartate site is built by Arg170 and Arg224. 2 residues coordinate carbamoyl phosphate: Gly265 and Pro266.

It belongs to the aspartate/ornithine carbamoyltransferase superfamily. ATCase family. In terms of assembly, heterododecamer (2C3:3R2) of six catalytic PyrB chains organized as two trimers (C3), and six regulatory PyrI chains organized as three dimers (R2).

The enzyme catalyses carbamoyl phosphate + L-aspartate = N-carbamoyl-L-aspartate + phosphate + H(+). Its pathway is pyrimidine metabolism; UMP biosynthesis via de novo pathway; (S)-dihydroorotate from bicarbonate: step 2/3. Its function is as follows. Catalyzes the condensation of carbamoyl phosphate and aspartate to form carbamoyl aspartate and inorganic phosphate, the committed step in the de novo pyrimidine nucleotide biosynthesis pathway. The sequence is that of Aspartate carbamoyltransferase catalytic subunit from Flavobacterium psychrophilum (strain ATCC 49511 / DSM 21280 / CIP 103535 / JIP02/86).